Consider the following 342-residue polypeptide: Holliday junction branch migration complex subunit RuvB (342 aa).

Positions 2 to 181 (TDNPLLSSAS…FGIPVRLQFY (180 aa)) are large ATPase domain (RuvB-L). ATP-binding residues include Leu-20, Arg-21, Gly-62, Lys-65, Thr-66, Thr-67, Arg-171, Tyr-181, and Arg-218. Residue Thr-66 participates in Mg(2+) binding. Positions 182–252 (SVEELERVVA…IADNALTRLE (71 aa)) are small ATPAse domain (RuvB-S). Positions 255–342 (KIGLDLQDRR…QMPGLFGPDE (88 aa)) are head domain (RuvB-H). DNA contacts are provided by Arg-291, Arg-310, and Arg-315.

This sequence belongs to the RuvB family. Homohexamer. Forms an RuvA(8)-RuvB(12)-Holliday junction (HJ) complex. HJ DNA is sandwiched between 2 RuvA tetramers; dsDNA enters through RuvA and exits via RuvB. An RuvB hexamer assembles on each DNA strand where it exits the tetramer. Each RuvB hexamer is contacted by two RuvA subunits (via domain III) on 2 adjacent RuvB subunits; this complex drives branch migration. In the full resolvosome a probable DNA-RuvA(4)-RuvB(12)-RuvC(2) complex forms which resolves the HJ.

It is found in the cytoplasm. The enzyme catalyses ATP + H2O = ADP + phosphate + H(+). In terms of biological role, the RuvA-RuvB-RuvC complex processes Holliday junction (HJ) DNA during genetic recombination and DNA repair, while the RuvA-RuvB complex plays an important role in the rescue of blocked DNA replication forks via replication fork reversal (RFR). RuvA specifically binds to HJ cruciform DNA, conferring on it an open structure. The RuvB hexamer acts as an ATP-dependent pump, pulling dsDNA into and through the RuvAB complex. RuvB forms 2 homohexamers on either side of HJ DNA bound by 1 or 2 RuvA tetramers; 4 subunits per hexamer contact DNA at a time. Coordinated motions by a converter formed by DNA-disengaged RuvB subunits stimulates ATP hydrolysis and nucleotide exchange. Immobilization of the converter enables RuvB to convert the ATP-contained energy into a lever motion, pulling 2 nucleotides of DNA out of the RuvA tetramer per ATP hydrolyzed, thus driving DNA branch migration. The RuvB motors rotate together with the DNA substrate, which together with the progressing nucleotide cycle form the mechanistic basis for DNA recombination by continuous HJ branch migration. Branch migration allows RuvC to scan DNA until it finds its consensus sequence, where it cleaves and resolves cruciform DNA. The polypeptide is Holliday junction branch migration complex subunit RuvB (Novosphingobium aromaticivorans (strain ATCC 700278 / DSM 12444 / CCUG 56034 / CIP 105152 / NBRC 16084 / F199)).